Reading from the N-terminus, the 89-residue chain is MALTQLRKQEIISNYQVHETDTGSADVQVAMLTERINRLSEHLQANKKDHSSRRGLLKLIGQRKRLLAYISQESREKYQALIARLGIRG.

Belongs to the universal ribosomal protein uS15 family. Part of the 30S ribosomal subunit. Forms a bridge to the 50S subunit in the 70S ribosome, contacting the 23S rRNA.

One of the primary rRNA binding proteins, it binds directly to 16S rRNA where it helps nucleate assembly of the platform of the 30S subunit by binding and bridging several RNA helices of the 16S rRNA. Its function is as follows. Forms an intersubunit bridge (bridge B4) with the 23S rRNA of the 50S subunit in the ribosome. This Nostoc punctiforme (strain ATCC 29133 / PCC 73102) protein is Small ribosomal subunit protein uS15.